Consider the following 148-residue polypeptide: Nodulation protein NolJ (148 aa).

The segment covering 66–78 (ADEAMEETEEDAD) has biased composition (acidic residues). Disordered regions lie at residues 66–93 (ADEA…VSDG) and 124–148 (AAKG…RGYG). Positions 124–136 (AAKGAGAAVPGPN) are enriched in low complexity.

Functionally, involved in efficiency of soybean nodulation and in nodulation delay. This is Nodulation protein NolJ (nolJ) from Rhizobium fredii (Sinorhizobium fredii).